Consider the following 889-residue polypeptide: Phosphofurin acidic cluster sorting protein 2 (889 aa).

Disordered regions lie at residues 180–246, 293–463, and 687–740; these read DHED…TSMT, LDME…PDAR, and SSAT…SQGV. A compositionally biased stretch (basic and acidic residues) spans 343-358; it reads SHKEPPSPADVPEKTR. Phosphoserine occurs at positions 390, 416, 453, 691, and 694. 2 stretches are compositionally biased toward low complexity: residues 687–720 and 727–737; these read SSAT…KEAS and PSVSGGLSSPS.

It belongs to the PACS family. As to quaternary structure, interacts with BID and PKD2. Interacts with SIRT1. Interacts with HDAC1. Interacts with TRPV1. Interacts with WDR37. (Microbial infection) Interacts with HIV-1 Nef. Broadly expressed, with greatest levels in skeletal muscle followed by heart, brain, pancreas and testis.

It localises to the endoplasmic reticulum. Its subcellular location is the mitochondrion. In terms of biological role, multifunctional sorting protein that controls the endoplasmic reticulum (ER)-mitochondria communication, including the apposition of mitochondria with the ER and ER homeostasis. In addition, in response to apoptotic inducer, translocates BIB to mitochondria, which initiates a sequence of events including the formation of mitochondrial truncated BID, the release of cytochrome c, the activation of caspase-3 thereby causing cell death. May also be involved in ion channel trafficking, directing acidic cluster-containing ion channels to distinct subcellular compartments. The protein is Phosphofurin acidic cluster sorting protein 2 of Homo sapiens (Human).